A 368-amino-acid chain; its full sequence is uncharacterized protein (368 aa).

This sequence belongs to the ornithine cyclodeaminase/mu-crystallin family.

This is an uncharacterized protein from Dictyostelium discoideum (Social amoeba).